We begin with the raw amino-acid sequence, 360 residues long: MATAETFYDVIRRQGITRRSFTKFCSLTAASLGFGPGAATAMAEALETKERVPVIWMHGLECTCCSESFIRSAHPLVKDVVLSMISLDYDDTIMAAAGHQAESILAETKEKYKGKYILAVEGNPPLNEGGMFCIDGGKPFVEKLKWMAEDAMAIIAWGACASWGCVQAAKPNPTQATPIDKVILDKPIIKVPGCPPIAEVMTGVVTFITTFGKLPELDRQGRPKMFYSQRIHDKCYRRPHFDAGQFVEEWDDEGARKGYCLYKMGCKGPTTYNACSTVRWNGGVSFPIQSGHGCIGCSEDGFWDNGSFYDRLTNIHQFGIEANADKVGMTAAGVVGGAIAAHAAVTAVKRLTTKREKADA.

A signal peptide (tat-type signal) is located at residues Met-1–Leu-46. Residues Cys-62, Cys-65, Cys-160, Cys-194, His-232, Cys-235, Cys-260, and Cys-266 each contribute to the [4Fe-4S] cluster site. Residues Cys-275, Cys-294, and Cys-297 each contribute to the [3Fe-4S] cluster site.

It belongs to the [NiFe]/[NiFeSe] hydrogenase small subunit family. As to quaternary structure, heterodimer of a large and a small subunit. Requires [4Fe-4S] cluster as cofactor. [3Fe-4S] cluster is required as a cofactor. Post-translationally, predicted to be exported by the Tat system. The position of the signal peptide cleavage has not been experimentally proven.

The protein resides in the cell membrane. It catalyses the reaction H2 + A = AH2. Functionally, this enzyme recycles the H(2) produced by nitrogenase to increase the production of ATP and to protect nitrogenase against inhibition or damage by O(2) under carbon- or phosphate-limited conditions. This is Uptake hydrogenase small subunit (hupA) from Rhizobium leguminosarum bv. viciae.